We begin with the raw amino-acid sequence, 234 residues long: Demethylmenaquinone methyltransferase (234 aa).

S-adenosyl-L-methionine-binding positions include threonine 58, aspartate 79, and 106–107; that span reads NA.

This sequence belongs to the class I-like SAM-binding methyltransferase superfamily. MenG/UbiE family.

It catalyses the reaction a 2-demethylmenaquinol + S-adenosyl-L-methionine = a menaquinol + S-adenosyl-L-homocysteine + H(+). The protein operates within quinol/quinone metabolism; menaquinone biosynthesis; menaquinol from 1,4-dihydroxy-2-naphthoate: step 2/2. In terms of biological role, methyltransferase required for the conversion of demethylmenaquinol (DMKH2) to menaquinol (MKH2). This Geobacillus sp. (strain WCH70) protein is Demethylmenaquinone methyltransferase.